The primary structure comprises 858 residues: Protein translocase subunit SecA (858 aa).

Residues Gln-88, 106-110, and Asp-494 each bind ATP; that span reads GEGKT. The disordered stretch occupies residues 808 to 848; it reads KEDRGQLSYSGGGNAEDARNTPAKAAPRIGRNDPCPCGSGR. Residues Cys-842, Cys-844, Cys-853, and Cys-854 each coordinate Zn(2+).

It belongs to the SecA family. As to quaternary structure, monomer and homodimer. Part of the essential Sec protein translocation apparatus which comprises SecA, SecYEG and auxiliary proteins SecDF-YajC and YidC. Zn(2+) serves as cofactor.

The protein resides in the cell inner membrane. It localises to the cytoplasm. The catalysed reaction is ATP + H2O + cellular proteinSide 1 = ADP + phosphate + cellular proteinSide 2.. Functionally, part of the Sec protein translocase complex. Interacts with the SecYEG preprotein conducting channel. Has a central role in coupling the hydrolysis of ATP to the transfer of proteins into and across the cell membrane, serving as an ATP-driven molecular motor driving the stepwise translocation of polypeptide chains across the membrane. The sequence is that of Protein translocase subunit SecA from Desulfovibrio desulfuricans (strain ATCC 27774 / DSM 6949 / MB).